We begin with the raw amino-acid sequence, 372 residues long: Alanine dehydrogenase (372 aa).

Substrate is bound by residues Arg-15 and Lys-75. The active-site Proton donor/acceptor is the His-96. NAD(+)-binding positions include Ser-134, 178-179, Asp-198, Ser-220, 239-240, 267-270, Arg-280, and 299-302; these read IA, VL, IAID, and VANM. Asp-270 acts as the Proton donor/acceptor in catalysis.

The protein belongs to the AlaDH/PNT family. Homohexamer.

It localises to the cytoplasm. The catalysed reaction is L-alanine + NAD(+) + H2O = pyruvate + NH4(+) + NADH + H(+). It functions in the pathway amino-acid degradation; L-alanine degradation via dehydrogenase pathway; NH(3) and pyruvate from L-alanine: step 1/1. Inhibited by p-chloromercuribenzoate and HgCl(2) and by Cu(2+) and Pb(2+) salts, unaffected by amino acids such as D-alanine and beta-alanine or by nucleotides or nucleosides. In terms of biological role, catalyzes the reversible reductive amination of pyruvate to L-alanine. Prefers L-alanine for oxidative deamination, other substrates are poorly reactive. In the other direction 2-oxobutyrate is almost as reactive as pyruvate. Ammonia is the sole amino donor for the reductive amination of pyruvate, NADPH is inert. Reductive amination proceeds through a sequential, ordered ternary-binary mechanism, where NADH binds first followed by ammonia and pyruvate; the products are released in the order L-alanine and NAD(+). A key factor in the assimilation of L-alanine as an energy source via the tricarboxylic acid cycle during sporulation. The chain is Alanine dehydrogenase (ald) from Lysinibacillus sphaericus (Bacillus sphaericus).